The following is a 180-amino-acid chain: O-acetyl-ADP-ribose deacetylase (180 aa).

The Macro domain maps to 1-175; the sequence is MKPQIEVVVG…LYQRLLIQRG (175 aa). Substrate is bound by residues 11–12, asparagine 25, 33–35, and 122–126; these read DI, GVD, and STGVY. Aspartate 35 functions as the Proton acceptor in the catalytic mechanism.

This sequence belongs to the MacroD-type family. YmdB subfamily. Homodimer. Interacts with RNase III.

The catalysed reaction is 3''-O-acetyl-ADP-D-ribose + H2O = ADP-D-ribose + acetate + H(+). It catalyses the reaction 2''-O-acetyl-ADP-D-ribose + H2O = ADP-D-ribose + acetate + H(+). Functionally, deacetylates O-acetyl-ADP ribose to yield ADP-ribose and free acetate. Down-regulates ribonuclease 3 (RNase III) activity. Acts by interacting directly with the region of the ribonuclease that is required for dimerization/activation. The chain is O-acetyl-ADP-ribose deacetylase from Enterobacter sp. (strain 638).